A 117-amino-acid polypeptide reads, in one-letter code: Immunoglobulin lambda variable 7-43 (117 aa).

An N-terminal signal peptide occupies residues 1–19; it reads MAWTPLFLFLLTCCPGSNS. Residues 20–44 are framework-1; it reads QTVVTQEPSLTVSPGGTVTLTCASS. One can recognise an Ig-like domain in the interval 20–117; sequence QTVVTQEPSL…YCLLYYGGAQ (98 aa). A disulfide bridge links Cys-41 with Cys-109. The segment at 45-53 is complementarity-determining-1; it reads TGAVTSGYY. Positions 54-70 are framework-2; the sequence is PNWFQQKPGQAPRALIY. A complementarity-determining-2 region spans residues 71 to 73; the sequence is STS. The interval 74 to 109 is framework-3; the sequence is NKHSWTPARFSGSLLGGKAALTLSGVQPEDEAEYYC. The complementarity-determining-3 stretch occupies residues 110–117; sequence LLYYGGAQ.

Immunoglobulins are composed of two identical heavy chains and two identical light chains; disulfide-linked.

It is found in the secreted. Its subcellular location is the cell membrane. Its function is as follows. V region of the variable domain of immunoglobulin light chains that participates in the antigen recognition. Immunoglobulins, also known as antibodies, are membrane-bound or secreted glycoproteins produced by B lymphocytes. In the recognition phase of humoral immunity, the membrane-bound immunoglobulins serve as receptors which, upon binding of a specific antigen, trigger the clonal expansion and differentiation of B lymphocytes into immunoglobulins-secreting plasma cells. Secreted immunoglobulins mediate the effector phase of humoral immunity, which results in the elimination of bound antigens. The antigen binding site is formed by the variable domain of one heavy chain, together with that of its associated light chain. Thus, each immunoglobulin has two antigen binding sites with remarkable affinity for a particular antigen. The variable domains are assembled by a process called V-(D)-J rearrangement and can then be subjected to somatic hypermutations which, after exposure to antigen and selection, allow affinity maturation for a particular antigen. The sequence is that of Immunoglobulin lambda variable 7-43 from Homo sapiens (Human).